Consider the following 843-residue polypeptide: Molybdenum cofactor sulfurase (843 aa).

Lys-241 carries the N6-(pyridoxal phosphate)lysine modification. Residue Cys-405 is part of the active site. Residues 657 to 836 (QYLRKFVMPG…LMVGDIVIPS (180 aa)) enclose the MOSC domain.

Belongs to the class-V pyridoxal-phosphate-dependent aminotransferase family. MOCOS subfamily. Pyridoxal 5'-phosphate is required as a cofactor.

It carries out the reaction Mo-molybdopterin + L-cysteine + AH2 = thio-Mo-molybdopterin + L-alanine + A + H2O. In terms of biological role, sulfurates the molybdenum cofactor. Sulfation of molybdenum is essential for xanthine dehydrogenase (XDH) and aldehyde oxidase (ADO) enzymes in which molybdenum cofactor is liganded by 1 oxygen and 1 sulfur atom in active form. The sequence is that of Molybdenum cofactor sulfurase from Aspergillus fumigatus (strain CBS 144.89 / FGSC A1163 / CEA10) (Neosartorya fumigata).